The chain runs to 399 residues: MAELLRSLQDSQLVARFQRRCGLFPAPDEGPRENGADPTERAARVPGVEHLPAANGKGGEAPANGLRRAAAPEAYVQKYVVKNYFYYYLFQFSAALGQEVFYITFLPFTHWNIDPYLSRRLIIIWVLVMYIGQVAKDVLKWPRPSSPPVVKLEKRLIAEYGMPSTHAMAATAIAFTLLISTMDRYQYPFVLGLVMAVVFSTLVCLSRLYTGMHTVLDVLGGVLITALLIVLTYPAWTFIDCLDSASPLFPVCVIVVPFFLCYNYPVSDYYSPTRADTTTILAAGAGVTIGFWINHFFQLVSKPAESLPVIQNIPPLTTYMLVLGLTKFAVGIVLILLVRQLVQNLSLQVLYSWFKVVTRNKEARRRLEIEVPYKFVTYTSVGICATTFVPMLHRFLGLP.

Helical transmembrane passes span 88 to 108, 121 to 141, 160 to 180, and 185 to 205; these read YLFQFSAALGQEVFYITFLPF, LIIIWVLVMYIGQVAKDVLKW, YGMPSTHAMAATAIAFTLLIS, and YQYPFVLGLVMAVVFSTLVCL. Residues 136-144 form a phosphatase sequence motif I region; that stretch reads KDVLKWPRP. The interval 163 to 166 is phosphatase sequence motif II; that stretch reads PSTH. Residue histidine 166 is the Proton donor of the active site. The tract at residues 206–217 is phosphatase sequence motif III; sequence SRLYTGMHTVLD. Residue histidine 213 is the Nucleophile of the active site. A run of 5 helical transmembrane segments spans residues 219–239, 247–267, 280–300, 318–338, and 371–391; these read LGGVLITALLIVLTYPAWTFI, PLFPVCVIVVPFFLCYNYPVS, ILAAGAGVTIGFWINHFFQLV, TYMLVLGLTKFAVGIVLILLV, and VPYKFVTYTSVGICATTFVPM.

Belongs to the type 2 lipid phosphate phosphatase family. Expressed strongly in kidney and heart, followed by brain, colon, small intestine and lung. Not detected in skeletal muscle, thymus, spleen, liver, placenta, and peripheral blood leukocytes.

Its subcellular location is the endoplasmic reticulum membrane. It carries out the reaction sphinganine 1-phosphate + H2O = sphinganine + phosphate. The enzyme catalyses sphing-4-enine 1-phosphate + H2O = sphing-4-enine + phosphate. It catalyses the reaction (4R)-hydroxysphinganine 1-phosphate + H2O = (4R)-hydroxysphinganine + phosphate. Has specific phosphohydrolase activity towards sphingoid base 1-phosphates. Has high phosphohydrolase activity against dihydrosphingosine-1-phosphate and sphingosine-1-phosphate (S1P) in vitro. Sphingosine-1-phosphate phosphatase activity is needed for efficient recycling of sphingosine into the sphingolipid synthesis pathway. May play a role in attenuating intracellular sphingosine 1-phosphate (S1P) signaling. May play a role in pro-inflammatory signaling. Plays a role in the regulation of pancreatic islet beta-cell endoplasmic reticulum stress and proliferation. The protein is Sphingosine-1-phosphate phosphatase 2 of Homo sapiens (Human).